The following is a 95-amino-acid chain: Aspartyl/glutamyl-tRNA(Asn/Gln) amidotransferase subunit C (95 aa).

Belongs to the GatC family. As to quaternary structure, heterotrimer of A, B and C subunits.

The catalysed reaction is L-glutamyl-tRNA(Gln) + L-glutamine + ATP + H2O = L-glutaminyl-tRNA(Gln) + L-glutamate + ADP + phosphate + H(+). It catalyses the reaction L-aspartyl-tRNA(Asn) + L-glutamine + ATP + H2O = L-asparaginyl-tRNA(Asn) + L-glutamate + ADP + phosphate + 2 H(+). In terms of biological role, allows the formation of correctly charged Asn-tRNA(Asn) or Gln-tRNA(Gln) through the transamidation of misacylated Asp-tRNA(Asn) or Glu-tRNA(Gln) in organisms which lack either or both of asparaginyl-tRNA or glutaminyl-tRNA synthetases. The reaction takes place in the presence of glutamine and ATP through an activated phospho-Asp-tRNA(Asn) or phospho-Glu-tRNA(Gln). The polypeptide is Aspartyl/glutamyl-tRNA(Asn/Gln) amidotransferase subunit C (Thermoanaerobacter pseudethanolicus (strain ATCC 33223 / 39E) (Clostridium thermohydrosulfuricum)).